A 153-amino-acid polypeptide reads, in one-letter code: Ribosome maturation factor RimP (153 aa).

The protein belongs to the RimP family.

Its subcellular location is the cytoplasm. Required for maturation of 30S ribosomal subunits. The polypeptide is Ribosome maturation factor RimP (Trichormus variabilis (strain ATCC 29413 / PCC 7937) (Anabaena variabilis)).